The sequence spans 899 residues: Valine--tRNA ligase (899 aa).

A 'HIGH' region motif is present at residues 58–68 (PNVTGVLHIGH). Positions 544 to 548 (KMSKS) match the 'KMSKS' region motif. Residue Lys547 coordinates ATP. Residues 836 to 898 (GTRLHNQRQK…NAELIALGLQ (63 aa)) adopt a coiled-coil conformation.

The protein belongs to the class-I aminoacyl-tRNA synthetase family. ValS type 1 subfamily. Monomer.

The protein localises to the cytoplasm. The catalysed reaction is tRNA(Val) + L-valine + ATP = L-valyl-tRNA(Val) + AMP + diphosphate. Catalyzes the attachment of valine to tRNA(Val). As ValRS can inadvertently accommodate and process structurally similar amino acids such as threonine, to avoid such errors, it has a 'posttransfer' editing activity that hydrolyzes mischarged Thr-tRNA(Val) in a tRNA-dependent manner. The sequence is that of Valine--tRNA ligase from Helicobacter hepaticus (strain ATCC 51449 / 3B1).